Here is a 348-residue protein sequence, read N- to C-terminus: Rhodopsin (348 aa).

At M1 the chain carries N-acetylmethionine. Residues 1-36 (MNGTEGPNFYVPFSNKTGVVRSPFEYPQYYLAEPWQ) lie on the Extracellular side of the membrane. N2 and N15 each carry an N-linked (GlcNAc...) asparagine glycan. Residues 37-61 (FSMLAAYMFLLIVLGFPINFLTLYV) form a helical membrane-spanning segment. The Cytoplasmic portion of the chain corresponds to 62–73 (TVQHKKLRTPLN). The chain crosses the membrane as a helical span at residues 74–96 (YILLNLAVADLFMVFGGFTTTLY). Residues 97-110 (TSLHGYFVFGPTGC) are Extracellular-facing. Residues C110 and C187 are joined by a disulfide bond. The chain crosses the membrane as a helical span at residues 111–133 (NLEGFFATLGGEIALWSLVVLAI). Residues 134-136 (ERY) carry the 'Ionic lock' involved in activated form stabilization motif. Residues 134 to 152 (ERYVVVCKPMSNFRFGENH) are Cytoplasmic-facing. The helical transmembrane segment at 153 to 173 (AIMGVGLTWVMALACAAPPLV) threads the bilayer. The Extracellular segment spans residues 174–202 (GWSRYIPEGMQCSCGIDYYTLKPEVNNES). Position 201 (E201) interacts with Zn(2+). A helical membrane pass occupies residues 203-224 (FVIYMFVVHFTIPMIVIFFCYG). Topologically, residues 225-252 (QLVFTVKEAAAQQQESATTQKAEKEVTR) are cytoplasmic. A helical membrane pass occupies residues 253–274 (MVIIMVIAFLICWVPYASVAFY). Residues 275–286 (IFTHQGFNFGPI) are Extracellular-facing. Q279 contributes to the Zn(2+) binding site. A helical transmembrane segment spans residues 287–308 (FMTLPAFFAKAAAIYNPVIYIM). K296 carries the post-translational modification N6-(retinylidene)lysine. At 309-348 (MNKQFRTCMITTLCCGKNPLGDDEVSASASKTETSQVAPA) the chain is on the cytoplasmic side. 2 S-palmitoyl cysteine lipidation sites follow: C322 and C323. An interaction with SAG region spans residues 330–348 (DDEVSASASKTETSQVAPA). 2 positions are modified to phosphoserine: S334 and S338. Phosphothreonine occurs at positions 340 and 342. S343 bears the Phosphoserine mark.

This sequence belongs to the G-protein coupled receptor 1 family. Opsin subfamily. In terms of assembly, homodimer. Interacts (phosphorylated form) with SAG. Interacts with GNAT1. Interacts with GNAT3. SAG and G-proteins compete for a common binding site. Interacts with GRK1. Interacts with PRCD; the interaction promotes PRCD stability. Forms a complex with ASAP1 and ARF4. Forms a complex with ASAP1, RAB11A, Rabin8/RAB3IP, ARF4 and RAB11FIP3; the complex regulates Golgi-to-cilia rhodopsin/RHO transport in photoreceptors. Post-translationally, phosphorylated on some or all of the serine and threonine residues present in the C-terminal region. Contains one covalently linked retinal chromophore. Upon light absorption, the covalently bound 11-cis-retinal is converted to all-trans-retinal. After hydrolysis of the Schiff base and release of the covalently bound all-trans-retinal, active rhodopsin is regenerated by binding of a fresh molecule of 11-cis-retinal.

The protein resides in the membrane. Its subcellular location is the cell projection. It localises to the cilium. The protein localises to the photoreceptor outer segment. In terms of biological role, photoreceptor required for image-forming vision at low light intensity. Required for photoreceptor cell viability after birth. Light-induced isomerization of 11-cis to all-trans retinal triggers a conformational change that activates signaling via G-proteins. Subsequent receptor phosphorylation mediates displacement of the bound G-protein alpha subunit by the arrestin SAG and terminates signaling. In Pagophilus groenlandicus (Harp seal), this protein is Rhodopsin (RHO).